A 364-amino-acid polypeptide reads, in one-letter code: Chorismate synthase (364 aa).

NADP(+)-binding residues include Arg-48 and Arg-54. FMN contacts are provided by residues 125 to 127 (RSS), Gly-282, 297 to 301 (KPPAS), and Arg-323.

This sequence belongs to the chorismate synthase family. As to quaternary structure, homotetramer. It depends on FMNH2 as a cofactor.

It carries out the reaction 5-O-(1-carboxyvinyl)-3-phosphoshikimate = chorismate + phosphate. The protein operates within metabolic intermediate biosynthesis; chorismate biosynthesis; chorismate from D-erythrose 4-phosphate and phosphoenolpyruvate: step 7/7. Functionally, catalyzes the anti-1,4-elimination of the C-3 phosphate and the C-6 proR hydrogen from 5-enolpyruvylshikimate-3-phosphate (EPSP) to yield chorismate, which is the branch point compound that serves as the starting substrate for the three terminal pathways of aromatic amino acid biosynthesis. This reaction introduces a second double bond into the aromatic ring system. This Chloroflexus aurantiacus (strain ATCC 29366 / DSM 635 / J-10-fl) protein is Chorismate synthase.